Reading from the N-terminus, the 192-residue chain is Signal peptidase complex catalytic subunit sec11 (192 aa).

Over 1–18 (MLSFLSSNLSSTRQSMAQ) the chain is Cytoplasmic. The chain crosses the membrane as a helical; Signal-anchor for type II membrane protein span at residues 19-39 (VLNFALVLSTAFMLWKGLSVF). At 40–192 (TASSSPIVVV…GLMVILQREQ (153 aa)) the chain is on the lumenal side. Active-site charge relay system residues include Ser-53, His-92, and Asp-133. The interval 177 to 188 (VLLGIMGLMVIL) is C-terminal short (CTS) helix.

It belongs to the peptidase S26B family. Component of the signal peptidase complex (SPC) composed of a catalytic subunit SEC11 and three accessory subunits SPC1, SPC2 and SPC3. The complex induces a local thinning of the ER membrane which is used to measure the length of the signal peptide (SP) h-region of protein substrates. This ensures the selectivity of the complex towards h-regions shorter than 18-20 amino acids. SPC associates with the translocon complex.

The protein localises to the endoplasmic reticulum membrane. It carries out the reaction Cleavage of hydrophobic, N-terminal signal or leader sequences from secreted and periplasmic proteins.. Its function is as follows. Catalytic component of the signal peptidase complex (SPC) which catalyzes the cleavage of N-terminal signal sequences from nascent proteins as they are translocated into the lumen of the endoplasmic reticulum. Specifically cleaves N-terminal signal peptides that contain a hydrophobic alpha-helix (h-region) shorter than 18-20 amino acids. In Aspergillus fumigatus (strain CBS 144.89 / FGSC A1163 / CEA10) (Neosartorya fumigata), this protein is Signal peptidase complex catalytic subunit sec11 (sec11).